Consider the following 599-residue polypeptide: Aspartate--tRNA(Asp/Asn) ligase (599 aa).

Glu173 contacts L-aspartate. Positions 197–200 (QLYK) are aspartate. L-aspartate is bound at residue Arg219. ATP contacts are provided by residues 219-221 (RDE) and Gln228. Residue His451 coordinates L-aspartate. Glu484 contacts ATP. An L-aspartate-binding site is contributed by Arg491. Residue 536–539 (GLDR) coordinates ATP.

This sequence belongs to the class-II aminoacyl-tRNA synthetase family. Type 1 subfamily. In terms of assembly, homodimer.

Its subcellular location is the cytoplasm. The enzyme catalyses tRNA(Asx) + L-aspartate + ATP = L-aspartyl-tRNA(Asx) + AMP + diphosphate. Aspartyl-tRNA synthetase with relaxed tRNA specificity since it is able to aspartylate not only its cognate tRNA(Asp) but also tRNA(Asn). Reaction proceeds in two steps: L-aspartate is first activated by ATP to form Asp-AMP and then transferred to the acceptor end of tRNA(Asp/Asn). The polypeptide is Aspartate--tRNA(Asp/Asn) ligase (Methylococcus capsulatus (strain ATCC 33009 / NCIMB 11132 / Bath)).